Consider the following 223-residue polypeptide: Endonuclease V (223 aa).

Positions 44 and 109 each coordinate Mg(2+).

It belongs to the endonuclease V family. Mg(2+) serves as cofactor.

Its subcellular location is the cytoplasm. The catalysed reaction is Endonucleolytic cleavage at apurinic or apyrimidinic sites to products with a 5'-phosphate.. In terms of biological role, DNA repair enzyme involved in the repair of deaminated bases. Selectively cleaves double-stranded DNA at the second phosphodiester bond 3' to a deoxyinosine leaving behind the intact lesion on the nicked DNA. This chain is Endonuclease V, found in Methanothrix thermoacetophila (strain DSM 6194 / JCM 14653 / NBRC 101360 / PT) (Methanosaeta thermophila).